The chain runs to 387 residues: S-adenosylmethionine synthase (387 aa).

His15 serves as a coordination point for ATP. Asp17 is a Mg(2+) binding site. Glu43 contacts K(+). Residues Glu56 and Gln99 each contribute to the L-methionine site. Residues Gln99–Arg109 are flexible loop. Residues Asp166 to Lys168, Arg232 to Phe233, Asp241, Arg247 to Lys248, Ala264, and Lys268 each bind ATP. Asp241 serves as a coordination point for L-methionine. Lys272 contributes to the L-methionine binding site.

The protein belongs to the AdoMet synthase family. As to quaternary structure, homotetramer; dimer of dimers. Mg(2+) serves as cofactor. Requires K(+) as cofactor.

It localises to the cytoplasm. The enzyme catalyses L-methionine + ATP + H2O = S-adenosyl-L-methionine + phosphate + diphosphate. It functions in the pathway amino-acid biosynthesis; S-adenosyl-L-methionine biosynthesis; S-adenosyl-L-methionine from L-methionine: step 1/1. Catalyzes the formation of S-adenosylmethionine (AdoMet) from methionine and ATP. The overall synthetic reaction is composed of two sequential steps, AdoMet formation and the subsequent tripolyphosphate hydrolysis which occurs prior to release of AdoMet from the enzyme. In Nitrosomonas europaea (strain ATCC 19718 / CIP 103999 / KCTC 2705 / NBRC 14298), this protein is S-adenosylmethionine synthase.